A 1235-amino-acid polypeptide reads, in one-letter code: ATP-dependent helicase/nuclease subunit A (1235 aa).

One can recognise a UvrD-like helicase ATP-binding domain in the interval 10 to 482 (SIWTDDQWSA…IDLNQNFRSR (473 aa)). ATP is bound at residue 31–38 (AAAGSGKT). The region spanning 509 to 799 (QAALKLGASY…RLMTIHSSKG (291 aa)) is the UvrD-like helicase C-terminal domain.

It belongs to the helicase family. AddA subfamily. As to quaternary structure, heterodimer of AddA and AddB/RexB. Requires Mg(2+) as cofactor.

The enzyme catalyses Couples ATP hydrolysis with the unwinding of duplex DNA by translocating in the 3'-5' direction.. The catalysed reaction is ATP + H2O = ADP + phosphate + H(+). The heterodimer acts as both an ATP-dependent DNA helicase and an ATP-dependent, dual-direction single-stranded exonuclease. Recognizes the chi site generating a DNA molecule suitable for the initiation of homologous recombination. The AddA nuclease domain is required for chi fragment generation; this subunit has the helicase and 3' -&gt; 5' nuclease activities. The polypeptide is ATP-dependent helicase/nuclease subunit A (Bacillus velezensis (strain DSM 23117 / BGSC 10A6 / LMG 26770 / FZB42) (Bacillus amyloliquefaciens subsp. plantarum)).